Here is a 268-residue protein sequence, read N- to C-terminus: Tryptophan synthase alpha chain (268 aa).

Catalysis depends on proton acceptor residues Glu49 and Asp60.

Belongs to the TrpA family. As to quaternary structure, tetramer of two alpha and two beta chains.

The enzyme catalyses (1S,2R)-1-C-(indol-3-yl)glycerol 3-phosphate + L-serine = D-glyceraldehyde 3-phosphate + L-tryptophan + H2O. The protein operates within amino-acid biosynthesis; L-tryptophan biosynthesis; L-tryptophan from chorismate: step 5/5. Its function is as follows. The alpha subunit is responsible for the aldol cleavage of indoleglycerol phosphate to indole and glyceraldehyde 3-phosphate. The sequence is that of Tryptophan synthase alpha chain from Aliivibrio fischeri (strain ATCC 700601 / ES114) (Vibrio fischeri).